The primary structure comprises 216 residues: Adenylate kinase (216 aa).

An ATP-binding site is contributed by 10–15; it reads GAGKGT. Positions 30–59 are NMP; that stretch reads STGDIFRANIKEKTPLGIEAKRYIDNGQLV. Residues T31, R36, 57-59, 85-88, and Q92 contribute to the AMP site; these read QLV and GFPR. The tract at residues 126 to 163 is LID; sequence GRRVCTSCGASYHIRFNPPKIEGKCDICDNELIQRKDD. R127 serves as a coordination point for ATP. Zn(2+) is bound by residues C130 and C133. An ATP-binding site is contributed by 136–137; the sequence is SY. The Zn(2+) site is built by C150 and C153. Positions 160 and 171 each coordinate AMP. E199 lines the ATP pocket.

It belongs to the adenylate kinase family. In terms of assembly, monomer.

It localises to the cytoplasm. It catalyses the reaction AMP + ATP = 2 ADP. It functions in the pathway purine metabolism; AMP biosynthesis via salvage pathway; AMP from ADP: step 1/1. Functionally, catalyzes the reversible transfer of the terminal phosphate group between ATP and AMP. Plays an important role in cellular energy homeostasis and in adenine nucleotide metabolism. This chain is Adenylate kinase, found in Clostridium botulinum (strain 657 / Type Ba4).